Here is a 200-residue protein sequence, read N- to C-terminus: Lipopolysaccharide core heptose(II)-phosphate phosphatase (200 aa).

A signal peptide spans 1 to 25; that stretch reads MLAFCRSSLKSKKYIIILLALAAIA.

It belongs to the phosphoglycerate mutase family. Ais subfamily.

Its subcellular location is the periplasm. Its pathway is bacterial outer membrane biogenesis; lipopolysaccharide metabolism. In terms of biological role, catalyzes the dephosphorylation of heptose(II) of the outer membrane lipopolysaccharide core. In Escherichia coli (strain ATCC 8739 / DSM 1576 / NBRC 3972 / NCIMB 8545 / WDCM 00012 / Crooks), this protein is Lipopolysaccharide core heptose(II)-phosphate phosphatase.